Here is a 539-residue protein sequence, read N- to C-terminus: Phosphoenolpyruvate carboxykinase (ATP) (539 aa).

Substrate is bound by residues arginine 64, tyrosine 206, and lysine 212. Residues lysine 212, histidine 231, and 247 to 255 (GLSGTGKTT) each bind ATP. Lysine 212 and histidine 231 together coordinate Mn(2+). Residue aspartate 268 coordinates Mn(2+). Residues glutamate 296, arginine 332, 448–449 (RI), and threonine 454 contribute to the ATP site. Residue arginine 332 participates in substrate binding.

The protein belongs to the phosphoenolpyruvate carboxykinase (ATP) family. In terms of assembly, monomer. It depends on Mn(2+) as a cofactor.

It is found in the cytoplasm. The enzyme catalyses oxaloacetate + ATP = phosphoenolpyruvate + ADP + CO2. Its pathway is carbohydrate biosynthesis; gluconeogenesis. Its function is as follows. Involved in the gluconeogenesis. Catalyzes the conversion of oxaloacetate (OAA) to phosphoenolpyruvate (PEP) through direct phosphoryl transfer between the nucleoside triphosphate and OAA. In Salmonella agona (strain SL483), this protein is Phosphoenolpyruvate carboxykinase (ATP).